The primary structure comprises 449 residues: UNC93-like protein MFSD11 (449 aa).

Residues 8–28 (LFNIIILGVAFMFMFTAFQTC) form a helical membrane-spanning segment. The N-linked (GlcNAc...) asparagine glycan is linked to Asn-40. The next 5 helical transmembrane spans lie at 53–73 (AIIY…VAIV), 74–94 (GPQL…AVFI), 96–116 (PFPW…AVLW), 138–158 (IFWA…YFAW), and 170–190 (RTVF…FFLI). Ser-204 is subject to Phosphoserine. Transmembrane regions (helical) follow at residues 239-259 (MLLL…FSGV), 277-297 (LIGL…SLFG), 309-329 (PVVL…FLNM), 359-379 (FLLG…LGFL), 385-405 (APAF…AFFY), and 410-430 (LLHW…ISFF).

It belongs to the unc-93 family.

The protein resides in the membrane. The sequence is that of UNC93-like protein MFSD11 (MFSD11) from Macaca fascicularis (Crab-eating macaque).